Reading from the N-terminus, the 233-residue chain is tRNA (guanine-N(7)-)-methyltransferase (233 aa).

Residues 1 to 23 (MSPQDRPSRTTEAFFGRRRGKPV) are disordered. S-adenosyl-L-methionine-binding residues include Glu64, Glu89, Asp116, and Asp138. Asp138 is a catalytic residue. Substrate contacts are provided by residues Lys142, Asp174, and 212-215 (TRYE).

This sequence belongs to the class I-like SAM-binding methyltransferase superfamily. TrmB family.

It catalyses the reaction guanosine(46) in tRNA + S-adenosyl-L-methionine = N(7)-methylguanosine(46) in tRNA + S-adenosyl-L-homocysteine. Its pathway is tRNA modification; N(7)-methylguanine-tRNA biosynthesis. Its function is as follows. Catalyzes the formation of N(7)-methylguanine at position 46 (m7G46) in tRNA. The sequence is that of tRNA (guanine-N(7)-)-methyltransferase from Mesorhizobium japonicum (strain LMG 29417 / CECT 9101 / MAFF 303099) (Mesorhizobium loti (strain MAFF 303099)).